Here is a 337-residue protein sequence, read N- to C-terminus: MDAFKTHLAIVASGAPLSREQARAAFDDLLSGEVTPIQAGAFLTALSVRGESEDEIVGAVSAMRARMLPVAAPEGAIDIVGTGGDHSGSYNVSTLAAILTAACGVPVAKHGNRAATSRSGAADVLAALGVKIGLPPEALARCLSEAGLCFMFAQTHHGAMRHVAPVRTELPFRTIFNMLGPLSNPAGVTAQVFGVSRPAWAEPLTRVLATLGSRRVWTVHGSDGLDEITTTGPTAVVALENGAFRHFTLDPREVGLPLATLDDLRGGDPEHNAAALGAVLEGTRNAYRDIAVLNAGAGLVVAGAAGSLAEGVARAQEAIDSGAARGTLARLVAVSNA.

5-phospho-alpha-D-ribose 1-diphosphate is bound by residues Gly81, 84 to 85, Ser89, 91 to 94, 109 to 117, and Ala121; these read GD, NVST, and KHGNRAATS. Gly81 contacts anthranilate. Ser93 is a Mg(2+) binding site. Asn112 contributes to the anthranilate binding site. Arg167 provides a ligand contact to anthranilate. Residues Asp226 and Glu227 each contribute to the Mg(2+) site.

Belongs to the anthranilate phosphoribosyltransferase family. In terms of assembly, homodimer. The cofactor is Mg(2+).

It carries out the reaction N-(5-phospho-beta-D-ribosyl)anthranilate + diphosphate = 5-phospho-alpha-D-ribose 1-diphosphate + anthranilate. Its pathway is amino-acid biosynthesis; L-tryptophan biosynthesis; L-tryptophan from chorismate: step 2/5. Catalyzes the transfer of the phosphoribosyl group of 5-phosphorylribose-1-pyrophosphate (PRPP) to anthranilate to yield N-(5'-phosphoribosyl)-anthranilate (PRA). The polypeptide is Anthranilate phosphoribosyltransferase (Methylorubrum extorquens (strain PA1) (Methylobacterium extorquens)).